The following is a 296-amino-acid chain: Iron(3+)-hydroxamate-binding protein FhuD (296 aa).

Positions 1–30 (MSGLPLISRRRLLTAMALSPLLWQMNTAHA) form a signal peptide, tat-type signal. The Fe/B12 periplasmic-binding domain maps to 37 to 296 (RIVALEWLPV…VLDNAIGGKA (260 aa)). Fe(III)-coprogen-binding residues include W68, R84, S103, Y106, F124, W217, W273, F274, and Y275.

It belongs to the bacterial solute-binding protein 8 family. In terms of assembly, the complex is composed of two ATP-binding proteins (FhuC), a transmembrane protein (FhuB) and a solute-binding protein (FhuD). FhuD interacts with FhuB. Substrate-loaded FhuD binds FhuB more strongly than FhuD alone. In terms of processing, exported by the Tat system. The position of the signal peptide cleavage has been experimentally proven. Can also be exported by the Sec system.

It is found in the periplasm. Part of the ABC transporter complex FhuCDB involved in iron(3+)-hydroxamate import. Binds the iron(3+)-hydroxamate complex and transfers it to the membrane-bound permease. Required for the transport of all iron(3+)-hydroxamate siderophores such as ferrichrome, gallichrome, desferrioxamine, coprogen, aerobactin, shizokinen, rhodotorulic acid and the antibiotic albomycin. This Escherichia coli (strain K12) protein is Iron(3+)-hydroxamate-binding protein FhuD (fhuD).